The sequence spans 91 residues: YcgL domain-containing protein Ent638_2370 (91 aa).

Residues 1–85 (MFCVIYRSAK…PPENLLKQHL (85 aa)) form the YcgL domain.

This Enterobacter sp. (strain 638) protein is YcgL domain-containing protein Ent638_2370.